Consider the following 440-residue polypeptide: Asparagine--tRNA ligase (440 aa).

Belongs to the class-II aminoacyl-tRNA synthetase family. As to quaternary structure, homodimer.

The protein localises to the cytoplasm. It catalyses the reaction tRNA(Asn) + L-asparagine + ATP = L-asparaginyl-tRNA(Asn) + AMP + diphosphate + H(+). In Roseiflexus sp. (strain RS-1), this protein is Asparagine--tRNA ligase.